Reading from the N-terminus, the 47-residue chain is Small ribosomal subunit protein uS14 (47 aa).

Cys12, Cys15, Cys30, and Cys33 together coordinate Zn(2+).

This sequence belongs to the universal ribosomal protein uS14 family. Zinc-binding uS14 subfamily. As to quaternary structure, part of the 30S ribosomal subunit. It depends on Zn(2+) as a cofactor.

Binds 16S rRNA, required for the assembly of 30S particles. This Methanosphaera stadtmanae (strain ATCC 43021 / DSM 3091 / JCM 11832 / MCB-3) protein is Small ribosomal subunit protein uS14.